The sequence spans 283 residues: Gap junction beta-1 protein (283 aa).

Residues Met-1 to Arg-22 are Cytoplasmic-facing. The helical transmembrane segment at Val-23–Gly-45 threads the bilayer. Residues Asp-46–Arg-75 are Extracellular-facing. A helical transmembrane segment spans residues Leu-76 to Val-95. At Ala-96 to Thr-130 the chain is on the cytoplasmic side. A helical membrane pass occupies residues Leu-131 to Phe-153. The Extracellular portion of the chain corresponds to Tyr-154–Thr-191. Residues Val-192–Ile-214 form a helical membrane-spanning segment. Residues Arg-215–Cys-283 are Cytoplasmic-facing. Phosphoserine is present on residues Ser-233, Ser-258, Ser-266, and Ser-277.

It belongs to the connexin family. Beta-type (group I) subfamily. As to quaternary structure, a connexon is composed of a hexamer of connexins. Interacts with CNST.

The protein localises to the cell membrane. It is found in the cell junction. Its subcellular location is the gap junction. In terms of biological role, one gap junction consists of a cluster of closely packed pairs of transmembrane channels, the connexons, through which materials of low MW diffuse from one cell to a neighboring cell. In Homo sapiens (Human), this protein is Gap junction beta-1 protein (GJB1).